A 271-amino-acid polypeptide reads, in one-letter code: Ubiquitin thioesterase OTUB1 (271 aa).

A2 carries the N-acetylalanine modification. S16 bears the Phosphoserine mark. A Phosphotyrosine; by SRC modification is found at Y26. Residues 80 to 271 form the OTU domain; it reads SYIRKTRPDG…RPGHYDILYK (192 aa). D88 is a catalytic residue. C91 (nucleophile) is an active-site residue. Ubiquitin-conjugating enzyme E2 binding stretches follow at residues 130-138 and 169-177; these read FTEFTIEDF and DYLVVYLRL. The free ubiquitin binding stretch occupies residues 189–195; that stretch reads FFEHFIE. The interval 206–213 is ubiquitin-conjugating enzyme E2 binding; that stretch reads QEVEPMCK. 2 free ubiquitin binding regions span residues 214–221 and 245–251; these read ESDHIHII and NPHIFPE. Residue H265 is part of the active site.

The protein belongs to the peptidase C65 family. Interacts with FUS and RACK1. Interacts with UBE2D1/UBCH5A, UBE2W/UBC16 and UBE2N/UBC13. In terms of assembly, interacts with RNF128. Forms a ternary complex with RNF128 and USP8. Interacts with the C-terminal UCH catalytic domain of USP8. As to quaternary structure, interacts with RNF128. Does not associate with USP8. In terms of processing, phosphorylation at Tyr-26 by SRC and SRMS promotes deubiquitination of RPTOR via a non-catalytic process. In terms of tissue distribution, isoform 1 is ubiquitous. Isoform 2 is expressed only in lymphoid tissues such as tonsils, lymph nodes and spleen, as well as peripheral blood mononuclear cells.

Its subcellular location is the cytoplasm. The enzyme catalyses Thiol-dependent hydrolysis of ester, thioester, amide, peptide and isopeptide bonds formed by the C-terminal Gly of ubiquitin (a 76-residue protein attached to proteins as an intracellular targeting signal).. By free ubiquitin: binding of free ubiquitin triggers conformational changes in the OTU domain and formation of a ubiquitin-binding helix in the N-terminus, promoting binding of the conjugated donor ubiquitin in UBE2N/UBC13 to OTUB1. In terms of biological role, hydrolase that can specifically remove 'Lys-48'-linked conjugated ubiquitin from proteins and plays an important regulatory role at the level of protein turnover by preventing degradation. Regulator of T-cell anergy, a phenomenon that occurs when T-cells are rendered unresponsive to antigen rechallenge and no longer respond to their cognate antigen. Acts via its interaction with RNF128/GRAIL, a crucial inductor of CD4 T-cell anergy. Isoform 1 destabilizes RNF128, leading to prevent anergy. In contrast, isoform 2 stabilizes RNF128 and promotes anergy. Surprisingly, it regulates RNF128-mediated ubiquitination, but does not deubiquitinate polyubiquitinated RNF128. Deubiquitinates estrogen receptor alpha (ESR1). Mediates deubiquitination of 'Lys-48'-linked polyubiquitin chains, but not 'Lys-63'-linked polyubiquitin chains. Not able to cleave di-ubiquitin. Also capable of removing NEDD8 from NEDD8 conjugates, but with a much lower preference compared to 'Lys-48'-linked ubiquitin. Plays a key non-catalytic role in DNA repair regulation by inhibiting activity of RNF168, an E3 ubiquitin-protein ligase that promotes accumulation of 'Lys-63'-linked histone H2A and H2AX at DNA damage sites. Inhibits RNF168 independently of ubiquitin thioesterase activity by binding and inhibiting UBE2N/UBC13, the E2 partner of RNF168, thereby limiting spreading of 'Lys-63'-linked histone H2A and H2AX marks. Inhibition occurs by binding to free ubiquitin: free ubiquitin acts as an allosteric regulator that increases affinity for UBE2N/UBC13 and disrupts interaction with UBE2V1. The OTUB1-UBE2N/UBC13-free ubiquitin complex adopts a configuration that mimics a cleaved 'Lys48'-linked di-ubiquitin chain. Acts as a regulator of mTORC1 and mTORC2 complexes. When phosphorylated at Tyr-26, acts as an activator of the mTORC1 complex by mediating deubiquitination of RPTOR via a non-catalytic process: acts by binding and inhibiting the activity of the ubiquitin-conjugating enzyme E2 (UBE2D1/UBCH5A, UBE2W/UBC16 and UBE2N/UBC13), thereby preventing ubiquitination of RPTOR. Can also act as an inhibitor of the mTORC1 and mTORC2 complexes in response to amino acids by mediating non-catalytic deubiquitination of DEPTOR. In Homo sapiens (Human), this protein is Ubiquitin thioesterase OTUB1 (OTUB1).